A 170-amino-acid polypeptide reads, in one-letter code: Transcriptional repressor NrdR (170 aa).

A zinc finger lies at 3 to 34; sequence CPFCRHPDSRVVDSRTTDDGTSIRRRRQCPDC. Residues 46-136 enclose the ATP-cone domain; the sequence is LMVVKRSGVT…VYRAFDSLED (91 aa). The interval 148–170 is disordered; it reads RPSAEDRGSGETLEVPAPAIAAD.

Belongs to the NrdR family. The cofactor is Zn(2+).

Negatively regulates transcription of bacterial ribonucleotide reductase nrd genes and operons by binding to NrdR-boxes. The chain is Transcriptional repressor NrdR from Streptomyces griseus subsp. griseus (strain JCM 4626 / CBS 651.72 / NBRC 13350 / KCC S-0626 / ISP 5235).